Here is a 62-residue protein sequence, read N- to C-terminus: Insect toxin BsIT4 (62 aa).

An LCN-type CS-alpha/beta domain is found at 1-62 (DGYIKGNKGC…WLYAATNTCG (62 aa)). 4 cysteine pairs are disulfide-bonded: Cys-10–Cys-61, Cys-14–Cys-35, Cys-21–Cys-42, and Cys-25–Cys-44.

It belongs to the long (4 C-C) scorpion toxin superfamily. Sodium channel inhibitor family. Beta subfamily. Expressed by the venom gland.

The protein resides in the secreted. Functionally, depressant insect beta-toxins cause a transient contraction paralysis followed by a slow flaccid paralysis. They bind voltage-independently at site-4 of sodium channels (Nav) and shift the voltage of activation toward more negative potentials thereby affecting sodium channel activation and promoting spontaneous and repetitive firing. This toxin is active only on insects. This chain is Insect toxin BsIT4, found in Hottentotta tamulus sindicus (Scorpion).